Consider the following 209-residue polypeptide: uncharacterized protein (209 aa).

Transmembrane regions (helical) follow at residues 10–32 (AVVI…YLAF), 37–59 (LRYV…TGLI), and 64–86 (FIYF…ILYV).

It is found in the cell membrane. This is an uncharacterized protein from Aquifex aeolicus (strain VF5).